The chain runs to 141 residues: Large ribosomal subunit protein uL11 (141 aa).

It belongs to the universal ribosomal protein uL11 family. Part of the ribosomal stalk of the 50S ribosomal subunit. Interacts with L10 and the large rRNA to form the base of the stalk. L10 forms an elongated spine to which L12 dimers bind in a sequential fashion forming a multimeric L10(L12)X complex. Post-translationally, one or more lysine residues are methylated.

In terms of biological role, forms part of the ribosomal stalk which helps the ribosome interact with GTP-bound translation factors. The protein is Large ribosomal subunit protein uL11 of Picosynechococcus sp. (strain ATCC 27264 / PCC 7002 / PR-6) (Agmenellum quadruplicatum).